We begin with the raw amino-acid sequence, 357 residues long: Probable dual-specificity RNA methyltransferase RlmN (357 aa).

The Proton acceptor role is filled by Glu-92. Positions 98–336 constitute a Radical SAM core domain; it reads HKYGLSVCVT…CGVRLEHGTD (239 aa). Cys-105 and Cys-341 are disulfide-bonded. Positions 112, 116, and 119 each coordinate [4Fe-4S] cluster. S-adenosyl-L-methionine is bound by residues 164–165, Ser-196, 219–221, and Asn-297; these read GE and SLH. Cys-341 functions as the S-methylcysteine intermediate in the catalytic mechanism.

It belongs to the radical SAM superfamily. RlmN family. The cofactor is [4Fe-4S] cluster.

Its subcellular location is the cytoplasm. It catalyses the reaction adenosine(2503) in 23S rRNA + 2 reduced [2Fe-2S]-[ferredoxin] + 2 S-adenosyl-L-methionine = 2-methyladenosine(2503) in 23S rRNA + 5'-deoxyadenosine + L-methionine + 2 oxidized [2Fe-2S]-[ferredoxin] + S-adenosyl-L-homocysteine. The catalysed reaction is adenosine(37) in tRNA + 2 reduced [2Fe-2S]-[ferredoxin] + 2 S-adenosyl-L-methionine = 2-methyladenosine(37) in tRNA + 5'-deoxyadenosine + L-methionine + 2 oxidized [2Fe-2S]-[ferredoxin] + S-adenosyl-L-homocysteine. Functionally, specifically methylates position 2 of adenine 2503 in 23S rRNA and position 2 of adenine 37 in tRNAs. This Exiguobacterium sibiricum (strain DSM 17290 / CCUG 55495 / CIP 109462 / JCM 13490 / 255-15) protein is Probable dual-specificity RNA methyltransferase RlmN.